A 305-amino-acid chain; its full sequence is MSNALPLDEWVETARQCKYLPENDLKKLCERVKELLLEESNVQPVRSPVTICGDIHGQFYDLLELFKTGGEVPDTNYVFMGDFVDRGYYSLETFTYLLALKARYPDKITLLRGNHESRQITQVYGFYDECQQKYGNVNAWKYCTSVFDFLTLAAIIDGKVLCVHGGLSPKVRTLDQIRIISRNLEIPHEGPFCDLMWSDPEDIEQWQPSPRGAGWLFGSKVTAEFEHINGLNLICRAHQLVQEGYRYMFDNSLVTVWSAPNYCYRCGNVASILSLNENLDRDFKIFQAVQEERNIPTRPTMQYFF.

Mn(2+) is bound by residues D54, H56, D82, and N114. Residue H115 is the Proton donor of the active site. Mn(2+) is bound by residues H164 and H238.

This sequence belongs to the PPP phosphatase family. PP-6 (PP-V) subfamily. The cofactor is Mn(2+).

It catalyses the reaction O-phospho-L-seryl-[protein] + H2O = L-seryl-[protein] + phosphate. It carries out the reaction O-phospho-L-threonyl-[protein] + H2O = L-threonyl-[protein] + phosphate. The chain is Serine/threonine-protein phosphatase 6 catalytic subunit (ppp6c) from Dictyostelium discoideum (Social amoeba).